Here is a 224-residue protein sequence, read N- to C-terminus: EF-hand calcium-binding domain-containing protein 1 (224 aa).

An N-terminal signal peptide occupies residues Met1 to Ser21. In terms of domain architecture, EF-hand spans Ile115–Asp150. Residues Asp128, Asp130, Asp132, Glu134, and Glu139 each coordinate Ca(2+).

Component of the acid-soluble organic matrix of calcified layers of the shell (at protein level).

It localises to the secreted. The chain is EF-hand calcium-binding domain-containing protein 1 from Lottia gigantea (Giant owl limpet).